Consider the following 316-residue polypeptide: Ribosomal RNA small subunit methyltransferase H (316 aa).

S-adenosyl-L-methionine is bound by residues 35–37, Asp55, Phe84, Asp105, and Gln112; that span reads AGH.

Belongs to the methyltransferase superfamily. RsmH family.

It is found in the cytoplasm. It catalyses the reaction cytidine(1402) in 16S rRNA + S-adenosyl-L-methionine = N(4)-methylcytidine(1402) in 16S rRNA + S-adenosyl-L-homocysteine + H(+). Functionally, specifically methylates the N4 position of cytidine in position 1402 (C1402) of 16S rRNA. This is Ribosomal RNA small subunit methyltransferase H from Streptococcus suis (strain 05ZYH33).